The sequence spans 111 residues: V-type proton ATPase subunit G 2 (111 aa).

This sequence belongs to the V-ATPase G subunit family. In terms of assembly, V-ATPase is a heteromultimeric enzyme composed of a peripheral catalytic V1 complex (components A to H) attached to an integral membrane V0 proton pore complex (components: a, c, c', c'' and d).

Its function is as follows. Catalytic subunit of the peripheral V1 complex of vacuolar ATPase (V-ATPase). V-ATPase is responsible for acidifying a variety of intracellular compartments in eukaryotic cells. The chain is V-type proton ATPase subunit G 2 (VATG2) from Nicotiana tabacum (Common tobacco).